The following is a 288-amino-acid chain: Energy-coupling factor transporter ATP-binding protein EcfA2 (288 aa).

The ABC transporter domain occupies I3–S246. G40 to S47 is an ATP binding site.

The protein belongs to the ABC transporter superfamily. Energy-coupling factor EcfA family. As to quaternary structure, forms a stable energy-coupling factor (ECF) transporter complex composed of 2 membrane-embedded substrate-binding proteins (S component), 2 ATP-binding proteins (A component) and 2 transmembrane proteins (T component).

Its subcellular location is the cell membrane. In terms of biological role, ATP-binding (A) component of a common energy-coupling factor (ECF) ABC-transporter complex. Unlike classic ABC transporters this ECF transporter provides the energy necessary to transport a number of different substrates. The protein is Energy-coupling factor transporter ATP-binding protein EcfA2 of Listeria monocytogenes serotype 4b (strain F2365).